Reading from the N-terminus, the 366-residue chain is RNA 3'-terminal phosphate cyclase (366 aa).

6 residues coordinate ATP: glutamine 104, proline 131, tyrosine 294, aspartate 297, glutamine 298, and histidine 320. The active-site Tele-AMP-histidine intermediate is histidine 320.

Belongs to the RNA 3'-terminal cyclase family. Type 1 subfamily. As to expression, detected in retinal ganglion cells (RGCs) (at protein level).

It is found in the nucleus. The protein resides in the nucleoplasm. The enzyme catalyses a 3'-end 3'-phospho-ribonucleotide-RNA + ATP = a 3'-end 2',3'-cyclophospho-ribonucleotide-RNA + AMP + diphosphate. In terms of biological role, catalyzes the conversion of 3'-phosphate to a 2',3'-cyclic phosphodiester at the end of RNA. The mechanism of action of the enzyme occurs in 3 steps: (A) adenylation of the enzyme by ATP; (B) transfer of adenylate to an RNA-N3'P to produce RNA-N3'PP5'A; (C) and attack of the adjacent 2'-hydroxyl on the 3'-phosphorus in the diester linkage to produce the cyclic end product. Likely functions in some aspects of cellular RNA processing. Function plays an important role in regulating axon regeneration by inhibiting central nervous system (CNS) axon regeneration following optic nerve injury. The polypeptide is RNA 3'-terminal phosphate cyclase (Mus musculus (Mouse)).